The following is a 995-amino-acid chain: Epididymis-specific alpha-mannosidase (995 aa).

The signal sequence occupies residues 1–21 (MGPHSWLPLFMQLALLGPQWA). Histidine 36, aspartate 38, and aspartate 151 together coordinate Zn(2+). The Nucleophile role is filled by aspartate 151. The N-linked (GlcNAc...) asparagine glycan is linked to asparagine 285. Histidine 411 provides a ligand contact to Zn(2+). N-linked (GlcNAc...) asparagine glycosylation is found at asparagine 593, asparagine 625, asparagine 657, asparagine 733, asparagine 793, asparagine 875, and asparagine 977. Positions 956–977 (TEDGHHHRGSSRRPLPPLRGPN) are disordered.

This sequence belongs to the glycosyl hydrolase 38 family. Requires Zn(2+) as cofactor. In terms of processing, processed into a 27 kDa fragment localized on the equatorial segment and the apical rim of the head of mature sperm. As to expression, specific to the caput and corpus of the epididymis.

It is found in the secreted. It carries out the reaction Hydrolysis of terminal, non-reducing alpha-D-mannose residues in alpha-D-mannosides.. Can digest both p-nitro-phenyl-alpha-D-mannoside and high mannose oligosaccharide (Man(8)-GlcNAc(2)). May be involved in sperm maturation. Has a possible role in specific sperm-egg interaction since sperm surface mannosidase acts like a receptor for mannose-containing oligosaccharides located on the zona pellucida. In Sus scrofa (Pig), this protein is Epididymis-specific alpha-mannosidase (MAN2B2).